The sequence spans 208 residues: FMN-dependent NADH:quinone oxidoreductase 3 (208 aa).

The protein belongs to the azoreductase type 1 family. Homodimer. FMN serves as cofactor.

The catalysed reaction is 2 a quinone + NADH + H(+) = 2 a 1,4-benzosemiquinone + NAD(+). The enzyme catalyses N,N-dimethyl-1,4-phenylenediamine + anthranilate + 2 NAD(+) = 2-(4-dimethylaminophenyl)diazenylbenzoate + 2 NADH + 2 H(+). Functionally, quinone reductase that provides resistance to thiol-specific stress caused by electrophilic quinones. In terms of biological role, also exhibits azoreductase activity. Catalyzes the reductive cleavage of the azo bond in aromatic azo compounds to the corresponding amines. This chain is FMN-dependent NADH:quinone oxidoreductase 3, found in Bacillus cereus (strain ATCC 14579 / DSM 31 / CCUG 7414 / JCM 2152 / NBRC 15305 / NCIMB 9373 / NCTC 2599 / NRRL B-3711).